The chain runs to 162 residues: Probable tRNA (guanine(10)-N2)-dimethyltransferase (162 aa).

It belongs to the methyltransferase superfamily. Trm-G10 family. As to quaternary structure, monomer.

It localises to the cytoplasm. It carries out the reaction guanosine(10) in tRNA + 2 S-adenosyl-L-methionine = N(2)-dimethylguanosine(10) in tRNA + 2 S-adenosyl-L-homocysteine + 2 H(+). Catalyzes the adenosylmethionine-dependent methylation of the exocyclic amino group (N(2)) of guanosine at position 10 of various tRNAs. Acts via a two-step process that leads to the formation of either N(2)-monomethyl (m(2)G) or N(2)-dimethylguanosine (m(2)(2)G). The chain is Probable tRNA (guanine(10)-N2)-dimethyltransferase (trmG10) from Methanothermococcus thermolithotrophicus (Methanococcus thermolithotrophicus).